Consider the following 252-residue polypeptide: Small ribosomal subunit protein eS1 (252 aa).

The protein belongs to the eukaryotic ribosomal protein eS1 family. Component of the small ribosomal subunit. Mature ribosomes consist of a small (40S) and a large (60S) subunit. The 40S subunit contains about 33 different proteins and 1 molecule of RNA (18S). The 60S subunit contains about 49 different proteins and 3 molecules of RNA (25S, 5.8S and 5S).

Its subcellular location is the cytoplasm. This Enterocytozoon bieneusi (strain H348) (Microsporidian parasite) protein is Small ribosomal subunit protein eS1.